A 1081-amino-acid polypeptide reads, in one-letter code: Inversin (1081 aa).

ANK repeat units lie at residues 13-42 (SLAS…ALKD), 47-76 (FGRT…DVNK), 80-110 (SQRT…WMQK), 113-144 (EEMT…EVDT), 148-177 (NKQT…NIGI), 181-213 (EGKI…TESL), 220-250 (EGRT…NITS), 254-283 (LFRT…SGTI), 288-317 (QGAT…VKDD), 321-350 (EGRT…DIDI), 356-385 (YGGT…QVDA), 389-418 (MKHT…RVDL), 422-451 (DGHS…NPNV), 455-484 (AGRT…DPNI), 488-517 (EGRT…FPNQ), and 523-553 (ERYT…SIAA). Asn75 is subject to 3-hydroxyasparagine. The D-box 1 motif lies at 490 to 498 (RTALHWSCN). Positions 555 to 584 (QDIAAFKIQAVYKGYKVRKAFRDRKNLLMK) constitute an IQ 1 domain. The segment covering 589-610 (RKDAAAKKREEENKRREAEQQK) has biased composition (basic and acidic residues). A disordered region spans residues 589 to 889 (RKDAAAKKRE…PAPGPLSGQS (301 aa)). The segment covering 638–649 (RAPSKQPPSSEA) has biased composition (polar residues). Composition is skewed to basic and acidic residues over residues 688 to 698 (KPNESPREQCK), 724 to 740 (EKSR…DKGK), and 772 to 785 (DGHR…DTAS). Over residues 863–872 (SGTSTLSEDA) the composition is skewed to polar residues. The D-box 2 motif lies at 910 to 918 (RKELFRKKN). An IQ 2 domain is found at 917 to 946 (KNKAAAVIQRAWRSYQLRKHLSHLLHMKEL). One copy of the ANK 17 repeat lies at 1022–1050 (RTHSVLHLNSVSNLQCIHLLENSGRSKNF). Positions 1051 to 1061 (SYNLQSATPPK) are enriched in polar residues. Residues 1051-1081 (SYNLQSATPPKTKTKLRPSLEEECVRGSWNS) are disordered.

Binds calmodulin via its IQ domains. Interacts with APC2. Interacts with alpha-, beta-, and gamma-catenin. Interacts with N-cadherin (CDH2). Interacts with NPHP1. Interacts with DVL1, PRICKLE (PRICKLE1 or PRICKLE2) and Strabismus (VANGL1 or VANGL2). Component of a complex containing at least ANKS6, INVS, NEK8 and NPHP3. ANKS6 may organize complex assembly by linking INVS and NPHP3 to NEK8 and INVS may target the complex to the proximal ciliary axoneme. Interacts with IQCB1; the interaction likely requires additional interactors. Interacts with microtubules. In terms of processing, may be ubiquitinated via its interaction with APC2. Hydroxylated at Asn-75, most probably by HIF1AN.

It is found in the cytoplasm. The protein localises to the cytoskeleton. It localises to the membrane. The protein resides in the spindle. Its subcellular location is the nucleus. Its function is as follows. Required for normal renal development and establishment of left-right axis. Probably acts as a molecular switch between different Wnt signaling pathways. Inhibits the canonical Wnt pathway by targeting cytoplasmic disheveled (DVL1) for degradation by the ubiquitin-proteasome. This suggests that it is required in renal development to oppose the repression of terminal differentiation of tubular epithelial cells by Wnt signaling. Involved in the organization of apical junctions in kidney cells together with NPHP1, NPHP4 and RPGRIP1L/NPHP8. Does not seem to be strictly required for ciliogenesis. The chain is Inversin (INVS) from Canis lupus familiaris (Dog).